Consider the following 517-residue polypeptide: Variant surface glycoprotein MVAT5 (517 aa).

The N-terminal stretch at 1–21 (MIGKAFIILSLLNELPTPTAA) is a signal peptide. 2 disulfides stabilise this stretch: Cys417-Cys430 and Cys426-Cys443. Asn435 carries N-linked (GlcNAc...) asparagine glycosylation. Residues 454–470 (QAAQTAGAGEGAAGTTT) show a composition bias toward low complexity. Residues 454–487 (QAAQTAGAGEGAAGTTTDKCKDKKKDDCKSPDCK) are disordered. Over residues 471–487 (DKCKDKKKDDCKSPDCK) the composition is skewed to basic and acidic residues. Residue Asp495 is the site of GPI-anchor amidated aspartate attachment. A propeptide spans 496–517 (SSILLNKQFALMVSAAFVALLF) (removed in mature form).

The protein localises to the cell membrane. Functionally, VSG forms a coat on the surface of the parasite. The trypanosome evades the immune response of the host by expressing a series of antigenically distinct VSGs from an estimated 1000 VSG genes. This chain is Variant surface glycoprotein MVAT5, found in Trypanosoma brucei rhodesiense.